We begin with the raw amino-acid sequence, 516 residues long: Maturase K (516 aa).

It belongs to the intron maturase 2 family. MatK subfamily.

The protein localises to the plastid. It is found in the chloroplast. In terms of biological role, usually encoded in the trnK tRNA gene intron. Probably assists in splicing its own and other chloroplast group II introns. The sequence is that of Maturase K from Chara vulgaris (Common stonewort).